Reading from the N-terminus, the 456-residue chain is MSSHAMSVVILAAGKGTRMYSDLPKVLHTLAGKPMVQHVIDAAKHVGAQHIHLVYGHGGDLLQSTLKDASLNWVLQAEQLGTGHAMQQAAPFFSDDEDVLMLYGDVPLISVDTLQQLCAAKPQGGIGLLTVKLDDPTGYGRITRENGNVSGIVEHKDASDEQRQINEINTGILVANGADLKRWLAKLDNNNAQGEYYITDIIAMAWNEGREIAAVHPQRLSEVEGVNNRLQLARLEHVYQAEQAEKLLLAGVMLRDPARFDLRGTLQHGRDVEIDANVIIEGDVVLGNRVKIGAGCVIKNSVIGDDCEISPYSVVEDALLDTACTIGPFARLRPGAELLEGAHVGNFVEMKKARLGKGSKAGHLTYLGDAEIGDNVNIGAGTITCNYDGANKHKTIIGDDVFVGSDTQLVAPVTVAKGATIAAGTTVTRNIAENELVLTRVPQVHKQGWRRPVKKK.

The interval 1-229 (MSSHAMSVVI…LSEVEGVNNR (229 aa)) is pyrophosphorylase. UDP-N-acetyl-alpha-D-glucosamine is bound by residues 11 to 14 (LAAG), Lys25, Gln76, 81 to 82 (GT), 103 to 105 (YGD), Gly140, Glu154, Asn169, and Asn227. Asp105 is a Mg(2+) binding site. Mg(2+) is bound at residue Asn227. The segment at 230–250 (LQLARLEHVYQAEQAEKLLLA) is linker. The N-acetyltransferase stretch occupies residues 251 to 456 (GVMLRDPARF…QGWRRPVKKK (206 aa)). Residues Arg333 and Lys351 each contribute to the UDP-N-acetyl-alpha-D-glucosamine site. His363 serves as the catalytic Proton acceptor. 2 residues coordinate UDP-N-acetyl-alpha-D-glucosamine: Tyr366 and Asn377. Acetyl-CoA contacts are provided by residues Ala380, 386–387 (NY), Ser405, Ala423, and Arg440.

This sequence in the N-terminal section; belongs to the N-acetylglucosamine-1-phosphate uridyltransferase family. It in the C-terminal section; belongs to the transferase hexapeptide repeat family. Homotrimer. Mg(2+) is required as a cofactor.

The protein resides in the cytoplasm. It carries out the reaction alpha-D-glucosamine 1-phosphate + acetyl-CoA = N-acetyl-alpha-D-glucosamine 1-phosphate + CoA + H(+). The enzyme catalyses N-acetyl-alpha-D-glucosamine 1-phosphate + UTP + H(+) = UDP-N-acetyl-alpha-D-glucosamine + diphosphate. The protein operates within nucleotide-sugar biosynthesis; UDP-N-acetyl-alpha-D-glucosamine biosynthesis; N-acetyl-alpha-D-glucosamine 1-phosphate from alpha-D-glucosamine 6-phosphate (route II): step 2/2. It participates in nucleotide-sugar biosynthesis; UDP-N-acetyl-alpha-D-glucosamine biosynthesis; UDP-N-acetyl-alpha-D-glucosamine from N-acetyl-alpha-D-glucosamine 1-phosphate: step 1/1. Its pathway is bacterial outer membrane biogenesis; LPS lipid A biosynthesis. Its function is as follows. Catalyzes the last two sequential reactions in the de novo biosynthetic pathway for UDP-N-acetylglucosamine (UDP-GlcNAc). The C-terminal domain catalyzes the transfer of acetyl group from acetyl coenzyme A to glucosamine-1-phosphate (GlcN-1-P) to produce N-acetylglucosamine-1-phosphate (GlcNAc-1-P), which is converted into UDP-GlcNAc by the transfer of uridine 5-monophosphate (from uridine 5-triphosphate), a reaction catalyzed by the N-terminal domain. In Cronobacter sakazakii (strain ATCC BAA-894) (Enterobacter sakazakii), this protein is Bifunctional protein GlmU.